Consider the following 902-residue polypeptide: Nitrate reductase [NADPH] (902 aa).

Cysteine 182 serves as a coordination point for Mo-molybdopterin. The region spanning 537–612 (LPLIFADEVA…LKKYCIGRCS (76 aa)) is the Cytochrome b5 heme-binding domain. Heme contacts are provided by histidine 572 and histidine 595. In terms of domain architecture, FAD-binding FR-type spans 637 to 751 (RTKVPIVLIS…KGPLGHFTYY (115 aa)). Residues 689–692 (RAYT), 708–712 (LIKVY), phenylalanine 713, 725–727 (LFS), and threonine 778 each bind FAD. Residue 872 to 879 (CMCGPEGM) coordinates NADP(+).

The protein belongs to the nitrate reductase family. As to quaternary structure, homodimer. FAD serves as cofactor. Heme is required as a cofactor. It depends on Mo-molybdopterin as a cofactor.

It catalyses the reaction nitrite + NADP(+) + H2O = nitrate + NADPH + H(+). Functionally, nitrate reductase is a key enzyme involved in the first step of nitrate assimilation in plants, fungi and bacteria. In Phytophthora infestans (Potato late blight agent), this protein is Nitrate reductase [NADPH] (NIAA).